The chain runs to 580 residues: mRNA-decapping enzyme 1A (580 aa).

Phosphoserine is present on Ser-62. The segment covering 132 to 141 (RSQQAARDKQ) has biased composition (basic and acidic residues). 3 disordered regions span residues 132–154 (RSQQ…DHRP), 172–209 (QMGD…QDKS), and 245–276 (LPGD…NMGI). Phosphoserine is present on residues Ser-142, Ser-179, and Ser-180. A compositionally biased stretch (polar residues) spans 173–196 (MGDSNISSPGLQPSTQISNLGSTE). A compositionally biased stretch (low complexity) spans 253–264 (EPSSFLPFSFEP). A phosphoserine mark is found at Ser-319 and Ser-334. Polar residues predominate over residues 343-359 (QAVKTTPRQRSPLSSQP). The segment at 343–371 (QAVKTTPRQRSPLSSQPVPELSQASLAAS) is disordered. Thr-348 is modified (phosphothreonine). Residue Ser-353 is modified to Phosphoserine. The residue at position 376 (Arg-376) is an Asymmetric dimethylarginine. The residue at position 401 (Thr-401) is a Phosphothreonine. Phosphoserine occurs at positions 422, 520, 521, and 523. The disordered stretch occupies residues 510–533 (TRSSDLERKASSPSPLTVGTSENQ). Over residues 520 to 531 (SSPSPLTVGTSE) the composition is skewed to polar residues. Residues Thr-526 and Thr-529 each carry the phosphothreonine modification.

Belongs to the DCP1 family. In terms of assembly, forms a complex with EDC3, DCP2, DDX6 and EDC4/HEDLS, within this complex directly interacts with EDC3. Part of a cytoplasmic complex containing proteins involved in mRNA decay, including XRN1 and LSM1. Interacts with DCP1B. Interacts with DCP2. Interacts with DDX17 in an RNA-independent manner. Interacts with PNRC2. Interacts with SMAD4. Interacts with UPF1. Interacts with ZC3HAV1. Interacts with ZFP36L1. Interacts with NBDY. Interacts with DHX34; the interaction is RNA-independent. In terms of processing, (Microbial infection) Cleaved by porcine reproductive and respiratory syndrome virus serine protease nsp4 after Glu-238. The cleavage inhibits DCP1A function.

Its subcellular location is the cytoplasm. The protein localises to the P-body. It is found in the nucleus. The enzyme catalyses a 5'-end (N(7)-methyl 5'-triphosphoguanosine)-ribonucleoside in mRNA + H2O = N(7)-methyl-GDP + a 5'-end phospho-ribonucleoside in mRNA + 2 H(+). Its function is as follows. Necessary for the degradation of mRNAs, both in normal mRNA turnover and in nonsense-mediated mRNA decay. Removes the 7-methyl guanine cap structure from mRNA molecules, yielding a 5'-phosphorylated mRNA fragment and 7m-GDP. Contributes to the transactivation of target genes after stimulation by TGFB1. Essential for embryonic development. This Sus scrofa (Pig) protein is mRNA-decapping enzyme 1A (DCP1A).